Here is a 693-residue protein sequence, read N- to C-terminus: Elongation factor G (693 aa).

The tr-type G domain occupies 8-283 (PQQRNIGIMA…AVVEYLPSPV (276 aa)). Residues 17–24 (AHIDAGKT), 81–85 (DTPGH), and 135–138 (NKMD) each bind GTP.

It belongs to the TRAFAC class translation factor GTPase superfamily. Classic translation factor GTPase family. EF-G/EF-2 subfamily.

It localises to the cytoplasm. Functionally, catalyzes the GTP-dependent ribosomal translocation step during translation elongation. During this step, the ribosome changes from the pre-translocational (PRE) to the post-translocational (POST) state as the newly formed A-site-bound peptidyl-tRNA and P-site-bound deacylated tRNA move to the P and E sites, respectively. Catalyzes the coordinated movement of the two tRNA molecules, the mRNA and conformational changes in the ribosome. The sequence is that of Elongation factor G from Oleidesulfovibrio alaskensis (strain ATCC BAA-1058 / DSM 17464 / G20) (Desulfovibrio alaskensis).